Here is a 213-residue protein sequence, read N- to C-terminus: Adenylate kinase (213 aa).

An ATP-binding site is contributed by 10 to 15 (GCGKGT). Residues 30–59 (STGDLMRKEISLNTTLGLKCQEYMNAGKYV) form an NMP region. Residues Thr-31, Arg-36, 57-59 (KYV), 83-86 (GYPR), and Gln-90 contribute to the AMP site. Residues 124–161 (NRLVCPLCKASFNLETRKPKQEGLCDFDNTKLVKRSDD) form an LID region. ATP is bound at residue Arg-125. 2 residues coordinate Zn(2+): Cys-128 and Cys-131. 134–135 (SF) is a binding site for ATP. The Zn(2+) site is built by Cys-148 and Asp-151. Residues Arg-158 and Arg-169 each contribute to the AMP site. Asn-197 is an ATP binding site.

This sequence belongs to the adenylate kinase family. Monomer.

Its subcellular location is the cytoplasm. It catalyses the reaction AMP + ATP = 2 ADP. The protein operates within purine metabolism; AMP biosynthesis via salvage pathway; AMP from ADP: step 1/1. Its function is as follows. Catalyzes the reversible transfer of the terminal phosphate group between ATP and AMP. Plays an important role in cellular energy homeostasis and in adenine nucleotide metabolism. This is Adenylate kinase from Mycoplasma capricolum subsp. capricolum (strain California kid / ATCC 27343 / NCTC 10154).